Here is a 591-residue protein sequence, read N- to C-terminus: Metalloendopeptidase OPG085 (591 aa).

Histidine 41 serves as a coordination point for Zn(2+). Glutamate 44 is a catalytic residue. 2 residues coordinate Zn(2+): histidine 45 and glutamate 112.

The protein belongs to the peptidase M44 family. Requires Zn(2+) as cofactor. In terms of processing, undergoes proteolytic processing during the course of infection. May be cleaved into 46 kDa and 22 kDa products (Potential).

The protein localises to the virion. Probably involved in maturation of some viral proteins by processing them preferentially at Ala-Gly-|-Ser/Thr/Lys motifs. Does not seem to be responsible for the cleavage of major core proteins. This Monkeypox virus protein is Metalloendopeptidase OPG085 (OPG085).